Reading from the N-terminus, the 527-residue chain is Peptide chain release factor 3 (527 aa).

In terms of domain architecture, tr-type G spans A9 to L277. GTP contacts are provided by residues S18–T25, D86–H90, and N140–D143.

This sequence belongs to the TRAFAC class translation factor GTPase superfamily. Classic translation factor GTPase family. PrfC subfamily.

Its subcellular location is the cytoplasm. Its function is as follows. Increases the formation of ribosomal termination complexes and stimulates activities of RF-1 and RF-2. It binds guanine nucleotides and has strong preference for UGA stop codons. It may interact directly with the ribosome. The stimulation of RF-1 and RF-2 is significantly reduced by GTP and GDP, but not by GMP. This is Peptide chain release factor 3 from Pseudomonas fluorescens (strain SBW25).